Consider the following 328-residue polypeptide: Pancreas transcription factor 1 subunit alpha (328 aa).

Positions 163-215 (QLRQAANVRERRRMQSINDAFEGLRSHIPTLPYEKRLSKVDTLRLAIGYINFL) constitute a bHLH domain. Disordered regions lie at residues 259 to 278 (RGTR…PLAG) and 305 to 328 (DPRK…EFVS).

In terms of assembly, component of the pancreas transcription factor 1 complex (PTF1) which is composed of TCF3/p75, TCF12/p64 and PTF1A/p48. TCF3 is responsible for the nuclear import of the p48/p64 complex. Interacts with TCF3 and RBPSUH/RBP-Jkappa. Pancreas-specific (at protein level). Loss of expression is seen in ductal type pancreas cancers.

It is found in the nucleus. Its subcellular location is the cytoplasm. In terms of biological role, transcription factor implicated in the cell fate determination in various organs. Binds to the E-box consensus sequence 5'-CANNTG-3'. Plays a role in early and late pancreas development and differentiation. Important for determining whether cells allocated to the pancreatic buds continue towards pancreatic organogenesis or revert back to duodenal fates. May be involved in the maintenance of exocrine pancreas-specific gene expression including ELA1 and amylase. Required for the formation of pancreatic acinar and ductal cells. Plays an important role in cerebellar development. Directly regulated by FOXN4 and RORC during retinal development, FOXN4-PTF1A pathway plays a central role in directing the differentiation of retinal progenitors towards horizontal and amacrine fates. This chain is Pancreas transcription factor 1 subunit alpha (PTF1A), found in Homo sapiens (Human).